Consider the following 178-residue polypeptide: Alkyl hydroperoxide reductase AhpD (178 aa).

Cys-131 serves as the catalytic Proton donor. Cysteines 131 and 134 form a disulfide. The active-site Cysteine sulfenic acid (-SOH) intermediate is Cys-134.

This sequence belongs to the AhpD family. In terms of assembly, homotrimer.

It carries out the reaction N(6)-[(R)-dihydrolipoyl]-L-lysyl-[lipoyl-carrier protein] + a hydroperoxide = N(6)-[(R)-lipoyl]-L-lysyl-[lipoyl-carrier protein] + an alcohol + H2O. In terms of biological role, antioxidant protein with alkyl hydroperoxidase activity. Required for the reduction of the AhpC active site cysteine residues and for the regeneration of the AhpC enzyme activity. This Streptomyces coelicolor (strain ATCC BAA-471 / A3(2) / M145) protein is Alkyl hydroperoxide reductase AhpD.